A 500-amino-acid chain; its full sequence is Keratin, type II cuticular Hb1 (500 aa).

The tract at residues 1–106 (MTCGSGFRGR…PNAQCVKQEE (106 aa)) is head. Residues 106 to 417 (EKEQIKCLNN…RLLEGEEQRL (312 aa)) form the IF rod domain. The coil 1A stretch occupies residues 107–141 (KEQIKCLNNRFAAFIDKVRFLEQQNKLLETKLQFY). The linker 1 stretch occupies residues 142-151 (QNRQCCESNL). A coil 1B region spans residues 152–252 (EPLFNGYIET…YEEEIRVLQA (101 aa)). Residue K212 forms a Glycyl lysine isopeptide (Lys-Gly) (interchain with G-Cter in SUMO1) linkage. The linker 12 stretch occupies residues 253-269 (HISDTSVIVKMDNSRDL). Positions 270–413 (NMDNIVAEIK…ATYRRLLEGE (144 aa)) are coil 2. A tail region spans residues 414-500 (EQRLCEGVGS…GSCASVCRKC (87 aa)).

The protein belongs to the intermediate filament family. In terms of assembly, heterotetramer of two type I and two type II keratins.

This Bos taurus (Bovine) protein is Keratin, type II cuticular Hb1.